The chain runs to 771 residues: Endoplasmin homolog (771 aa).

The signal sequence occupies residues 1 to 24; that stretch reads MANSSLLRVVLVALLLLGSVTVSA. Residues asparagine 63, aspartate 109, and phenylalanine 160 each contribute to the ATP site. Asparagine 63 is a glycosylation site (N-linked (GlcNAc...) asparagine). Positions 254–282 are disordered; the sequence is AATPESAAEERSLDEGAVEEDPDKEGDTQ. N-linked (GlcNAc...) asparagine glycans are attached at residues asparagine 306 and asparagine 402. The tract at residues 727–771 is disordered; the sequence is ADDSLLPPDDAEYTVSDTETEEEEEQPKVDTNAHEEAETDGEGDL. Positions 752 to 762 are enriched in basic and acidic residues; that stretch reads QPKVDTNAHEE. A Prevents secretion from ER motif is present at residues 768 to 771; that stretch reads EGDL.

The protein belongs to the heat shock protein 90 family. Homotetramer.

The protein resides in the endoplasmic reticulum. Molecular chaperone that functions in the processing and transport of secreted proteins. Required for the synthesis of lipophosphoglycan (LPG), a cell surface glycoconjugate. Necessary for the attachment of the galactosyl residue to the mannose within the phosphoglycan repeats of the nascent LPG chain. Also required for addition of phosphoglycan to acid phosphatase. Not required for normal growth. Has ATPase activity. Binds heparin with micromolar affinity which may facilitate infection of host cells. The chain is Endoplasmin homolog from Leishmania donovani.